A 440-amino-acid polypeptide reads, in one-letter code: GTPase Der (440 aa).

EngA-type G domains follow at residues 3-167 (PIIA…PYDR) and 176-351 (TRIA…EQYC). Residues 9–16 (GRPNVGKS), 56–60 (DTGGF), 119–122 (NKVD), 182–189 (GRPNVGKS), 229–233 (DTAGI), and 294–297 (NKWD) each bind GTP. One can recognise a KH-like domain in the interval 352 to 436 (KRVTTGELNR…PLKLIFRGRD (85 aa)).

The protein belongs to the TRAFAC class TrmE-Era-EngA-EngB-Septin-like GTPase superfamily. EngA (Der) GTPase family. Associates with the 50S ribosomal subunit.

Its function is as follows. GTPase that plays an essential role in the late steps of ribosome biogenesis. The protein is GTPase Der of Citrifermentans bemidjiense (strain ATCC BAA-1014 / DSM 16622 / JCM 12645 / Bem) (Geobacter bemidjiensis).